Reading from the N-terminus, the 655-residue chain is Very long-chain specific acyl-CoA dehydrogenase, mitochondrial (655 aa).

The N-terminal 40 residues, 1-40 (MQSARMTPSVGRQLLRLGARSSRSAALQGQPRPTSAQRLY), are a transit peptide targeting the mitochondrion. Residues 1–70 (MQSARMTPSV…TREKPARAES (70 aa)) form a disordered region. The segment covering 21–37 (SSRSAALQGQPRPTSAQ) has biased composition (polar residues). The interval 41 to 482 (ASEATQAVLE…ALQGCMDKGK (442 aa)) is catalytic. Position 51 is an N6-acetyllysine (Lys-51). Positions 60–70 (STREKPARAES) are enriched in basic and acidic residues. Residues Lys-71 and Lys-127 each carry the N6-acetyllysine; alternate modification. 2 positions are modified to N6-succinyllysine; alternate: Lys-71 and Lys-127. N6-succinyllysine is present on Lys-195. An FAD-binding site is contributed by 214-223 (FCLTEPSSGS). At Cys-237 the chain carries S-nitrosocysteine. Position 239 is an N6-acetyllysine; alternate (Lys-239). Position 239 is an N6-succinyllysine; alternate (Lys-239). Position 249-251 (249-251 (WIS)) interacts with FAD. Lys-268 carries the post-translational modification N6-succinyllysine. 2 positions are modified to N6-acetyllysine; alternate: Lys-276 and Lys-278. N6-succinyllysine; alternate occurs at positions 276 and 278. N6-acetyllysine is present on residues Lys-298 and Lys-316. The residue at position 331 (Lys-331) is an N6-acetyllysine; alternate. The residue at position 331 (Lys-331) is an N6-succinyllysine; alternate. Residue Lys-372 is modified to N6-succinyllysine. Substrate is bound at residue 461-463 (FEG). Glu-462 serves as the catalytic Proton acceptor. 464–466 (TND) contacts FAD. Lys-482 is modified (N6-acetyllysine; alternate). Lys-482 carries the N6-succinyllysine; alternate modification. The interval 483–516 (ELTGLGNALKNPLGNVGLLIGEASKQLRRRTGIG) is membrane-anchoring. Phosphoserine occurs at positions 517 and 522. An N6-acetyllysine modification is found at Lys-550. Lys-556 carries the N6-acetyllysine; alternate modification. Lys-556 carries the post-translational modification N6-succinyllysine; alternate. Gln-562 contacts FAD. Lys-639 is modified (N6-succinyllysine).

The protein belongs to the acyl-CoA dehydrogenase family. In terms of assembly, homodimer. Homodimerizes after import into the mitochondrion. FAD is required as a cofactor. In terms of processing, S-nitrosylation at Cys-237 in liver improves catalytic efficiency. As to expression, widely expressed (at protein level).

It is found in the mitochondrion inner membrane. The enzyme catalyses a very-long-chain 2,3-saturated fatty acyl-CoA + oxidized [electron-transfer flavoprotein] + H(+) = a very-long-chain (2E)-enoyl-CoA + reduced [electron-transfer flavoprotein]. It carries out the reaction dodecanoyl-CoA + oxidized [electron-transfer flavoprotein] + H(+) = (2E)-dodecenoyl-CoA + reduced [electron-transfer flavoprotein]. It catalyses the reaction tetradecanoyl-CoA + oxidized [electron-transfer flavoprotein] + H(+) = (2E)-tetradecenoyl-CoA + reduced [electron-transfer flavoprotein]. The catalysed reaction is oxidized [electron-transfer flavoprotein] + hexadecanoyl-CoA + H(+) = (2E)-hexadecenoyl-CoA + reduced [electron-transfer flavoprotein]. The enzyme catalyses octadecanoyl-CoA + oxidized [electron-transfer flavoprotein] + H(+) = (2E)-octadecenoyl-CoA + reduced [electron-transfer flavoprotein]. It carries out the reaction eicosanoyl-CoA + oxidized [electron-transfer flavoprotein] + H(+) = (2E)-eicosenoyl-CoA + reduced [electron-transfer flavoprotein]. It catalyses the reaction docosanoyl-CoA + oxidized [electron-transfer flavoprotein] + H(+) = (2E)-docosenoyl-CoA + reduced [electron-transfer flavoprotein]. The catalysed reaction is tetracosanoyl-CoA + oxidized [electron-transfer flavoprotein] + H(+) = (2E)-tetracosenoyl-CoA + reduced [electron-transfer flavoprotein]. The protein operates within lipid metabolism; mitochondrial fatty acid beta-oxidation. Functionally, very long-chain specific acyl-CoA dehydrogenase is one of the acyl-CoA dehydrogenases that catalyze the first step of mitochondrial fatty acid beta-oxidation, an aerobic process breaking down fatty acids into acetyl-CoA and allowing the production of energy from fats. The first step of fatty acid beta-oxidation consists in the removal of one hydrogen from C-2 and C-3 of the straight-chain fatty acyl-CoA thioester, resulting in the formation of trans-2-enoyl-CoA. Among the different mitochondrial acyl-CoA dehydrogenases, very long-chain specific acyl-CoA dehydrogenase acts specifically on acyl-CoAs with saturated 12 to 24 carbons long primary chains. The protein is Very long-chain specific acyl-CoA dehydrogenase, mitochondrial of Rattus norvegicus (Rat).